Here is an 842-residue protein sequence, read N- to C-terminus: Alanine--tRNA ligase (842 aa).

Positions 549, 553, 650, and 654 each coordinate Zn(2+).

Belongs to the class-II aminoacyl-tRNA synthetase family. It depends on Zn(2+) as a cofactor.

It localises to the cytoplasm. The catalysed reaction is tRNA(Ala) + L-alanine + ATP = L-alanyl-tRNA(Ala) + AMP + diphosphate. In terms of biological role, catalyzes the attachment of alanine to tRNA(Ala) in a two-step reaction: alanine is first activated by ATP to form Ala-AMP and then transferred to the acceptor end of tRNA(Ala). Also edits incorrectly charged Ser-tRNA(Ala) and Gly-tRNA(Ala) via its editing domain. The protein is Alanine--tRNA ligase of Campylobacter jejuni (strain RM1221).